A 106-amino-acid polypeptide reads, in one-letter code: Thiosulfate sulfurtransferase GlpE (106 aa).

The Rhodanese domain maps to 17–105; that stretch reads QLPSVCLADI…WRHVYPYTAT (89 aa). Cysteine 65 (cysteine persulfide intermediate) is an active-site residue.

It belongs to the GlpE family.

The protein localises to the cytoplasm. The enzyme catalyses thiosulfate + hydrogen cyanide = thiocyanate + sulfite + 2 H(+). It catalyses the reaction thiosulfate + [thioredoxin]-dithiol = [thioredoxin]-disulfide + hydrogen sulfide + sulfite + 2 H(+). In terms of biological role, transferase that catalyzes the transfer of sulfur from thiosulfate to thiophilic acceptors such as cyanide or dithiols. May function in a CysM-independent thiosulfate assimilation pathway by catalyzing the conversion of thiosulfate to sulfite, which can then be used for L-cysteine biosynthesis. The polypeptide is Thiosulfate sulfurtransferase GlpE (Tolumonas auensis (strain DSM 9187 / NBRC 110442 / TA 4)).